A 218-amino-acid chain; its full sequence is Urease accessory protein UreG (218 aa).

Residue 22-29 (GPVGSGKT) participates in GTP binding.

Belongs to the SIMIBI class G3E GTPase family. UreG subfamily. In terms of assembly, homodimer. UreD, UreF and UreG form a complex that acts as a GTP-hydrolysis-dependent molecular chaperone, activating the urease apoprotein by helping to assemble the nickel containing metallocenter of UreC. The UreE protein probably delivers the nickel.

Its subcellular location is the cytoplasm. Facilitates the functional incorporation of the urease nickel metallocenter. This process requires GTP hydrolysis, probably effectuated by UreG. The sequence is that of Urease accessory protein UreG from Polaromonas sp. (strain JS666 / ATCC BAA-500).